We begin with the raw amino-acid sequence, 491 residues long: Katanin p60 ATPase-containing subunit A1 (491 aa).

The interval 1-29 (MSLLMISENVKLAREYALLGNYDSAMVYY) is interaction with KATNB1. Residues 1–75 (MSLLMISENV…VKDIMKTLES (75 aa)) are interaction with dynein and NDEL1. The interval 1–185 (MSLLMISENV…EPETNKFDST (185 aa)) is interaction with microtubules. Phosphoserine; by DYRK2 is present on residues serine 42 and serine 109. The disordered stretch occupies residues 87-185 (QHDLPASEGE…EPETNKFDST (99 aa)). Threonine 133 carries the post-translational modification Phosphothreonine; by DYRK2. The span at 145-169 (HNDRGKAVRCREKKEQNKGREEKNK) shows a compositional bias: basic and acidic residues. Serine 170 carries the phosphoserine modification. 249-256 (GPPGTGKT) serves as a coordination point for ATP.

It belongs to the AAA ATPase family. Katanin p60 subunit A1 subfamily. In terms of assembly, can homooligomerize into hexameric rings, which may be promoted by interaction with microtubules. Interacts with KATNB1, which may serve as a targeting subunit. Interacts with ASPM; the katanin complex formation KATNA1:KATNB1 is required for the association of ASPM Interacts with dynein and NDEL1. Associates with the E3 ligase complex containing DYRK2, EDD/UBR5, DDB1 and DCAF1 proteins (EDVP complex). Interacts with KLHL42 (via the kelch domains). Interacts with CUL3; the interaction is enhanced by KLHL42. Interacts with KATNB1 and KATNBL1. Interacts with CAMSAP2 and CAMSAP3; leading to regulate the length of CAMSAP-decorated microtubule stretches. In terms of processing, phosphorylation by DYRK2 triggers ubiquitination and subsequent degradation. Ubiquitinated by the BCR(KLHL42) E3 ubiquitin ligase complex, leading to its proteasomal degradation. Ubiquitinated by the EDVP E3 ligase complex and subsequently targeted for proteasomal degradation.

It localises to the cytoplasm. Its subcellular location is the midbody. The protein resides in the cytoskeleton. The protein localises to the microtubule organizing center. It is found in the centrosome. It localises to the spindle pole. Its subcellular location is the spindle. It catalyses the reaction n ATP + n H2O + a microtubule = n ADP + n phosphate + (n+1) alpha/beta tubulin heterodimers.. With respect to regulation, ATPase activity is stimulated by microtubules, which promote homooligomerization. ATP-dependent microtubule severing is stimulated by interaction with KATNB1. Catalytic subunit of a complex which severs microtubules in an ATP-dependent manner. Microtubule severing may promote rapid reorganization of cellular microtubule arrays and the release of microtubules from the centrosome following nucleation. Microtubule release from the mitotic spindle poles may allow depolymerization of the microtubule end proximal to the spindle pole, leading to poleward microtubule flux and poleward motion of chromosome. Microtubule release within the cell body of neurons may be required for their transport into neuronal processes by microtubule-dependent motor proteins. This transport is required for axonal growth. The chain is Katanin p60 ATPase-containing subunit A1 from Macaca fascicularis (Crab-eating macaque).